A 156-amino-acid chain; its full sequence is Phosphopantetheine adenylyltransferase (156 aa).

Residue Thr-10 coordinates substrate. ATP contacts are provided by residues 10–11 (TF) and His-18. Positions 42, 74, and 88 each coordinate substrate. ATP contacts are provided by residues 89–91 (GLR), Glu-99, and 124–130 (NAFISSS).

Belongs to the bacterial CoaD family. As to quaternary structure, homohexamer. Mg(2+) is required as a cofactor.

It is found in the cytoplasm. The enzyme catalyses (R)-4'-phosphopantetheine + ATP + H(+) = 3'-dephospho-CoA + diphosphate. It functions in the pathway cofactor biosynthesis; coenzyme A biosynthesis; CoA from (R)-pantothenate: step 4/5. In terms of biological role, reversibly transfers an adenylyl group from ATP to 4'-phosphopantetheine, yielding dephospho-CoA (dPCoA) and pyrophosphate. This is Phosphopantetheine adenylyltransferase from Campylobacter concisus (strain 13826).